A 139-amino-acid polypeptide reads, in one-letter code: Large ribosomal subunit protein uL16 (139 aa).

Residues 1–20 (MLIPKRTKYRKQHRPVRRGM) are compositionally biased toward basic residues. The interval 1–21 (MLIPKRTKYRKQHRPVRRGMS) is disordered.

This sequence belongs to the universal ribosomal protein uL16 family. As to quaternary structure, part of the 50S ribosomal subunit.

Binds 23S rRNA and is also seen to make contacts with the A and possibly P site tRNAs. In Bifidobacterium adolescentis (strain ATCC 15703 / DSM 20083 / NCTC 11814 / E194a), this protein is Large ribosomal subunit protein uL16.